The following is a 171-amino-acid chain: Lipoprotein signal peptidase (171 aa).

Helical transmembrane passes span 8-28 (SFLW…YIVV), 64-84 (WQQY…VYFL), and 99-119 (ALII…GFVV). Residues D120 and D138 contribute to the active site. A helical transmembrane segment spans residues 133–153 (VFNIADIAICIGAGLLALDAF).

This sequence belongs to the peptidase A8 family.

The protein resides in the cell inner membrane. It catalyses the reaction Release of signal peptides from bacterial membrane prolipoproteins. Hydrolyzes -Xaa-Yaa-Zaa-|-(S,diacylglyceryl)Cys-, in which Xaa is hydrophobic (preferably Leu), and Yaa (Ala or Ser) and Zaa (Gly or Ala) have small, neutral side chains.. It participates in protein modification; lipoprotein biosynthesis (signal peptide cleavage). In terms of biological role, this protein specifically catalyzes the removal of signal peptides from prolipoproteins. The sequence is that of Lipoprotein signal peptidase from Haemophilus influenzae (strain PittGG).